The sequence spans 817 residues: Coiled-coil domain-containing protein 175 (817 aa).

Coiled-coil stretches lie at residues 130-166 (ILEISQVKGKIEKTNDEIKFLNDKIIELKNMNEALGI) and 217-594 (LQDA…KQEE). Residues 761-817 (EEESPSSLSKEDLQKAGMKQKEEKTLRFSPSLHTRRDTLSRNCKMIKKRSRSPKNKP) form a disordered region. Positions 769-786 (SKEDLQKAGMKQKEEKTL) are enriched in basic and acidic residues. Basic residues predominate over residues 804–817 (KMIKKRSRSPKNKP).

The polypeptide is Coiled-coil domain-containing protein 175 (Ccdc175) (Rattus norvegicus (Rat)).